The sequence spans 391 residues: F-box/kelch-repeat protein At4g05080 (391 aa).

The F-box domain maps to 2–49 (TMMFDLTQDLVKEILSRVPITSLGAVRSTCKGWNALSKDRILCKAKPK). Kelch repeat units follow at residues 100–143 (HMYY…TFCL) and 144–194 (RYDN…SASV). The span at 369 to 385 (RRRRERNSKRKEKKRKG) shows a compositional bias: basic residues. Residues 369 to 391 (RRRRERNSKRKEKKRKGTTNNKV) form a disordered region.

The sequence is that of F-box/kelch-repeat protein At4g05080 from Arabidopsis thaliana (Mouse-ear cress).